Consider the following 331-residue polypeptide: Ferredoxin--NADP reductase (331 aa).

FAD is bound by residues threonine 14, glutamate 33, glutamine 41, tyrosine 46, valine 86, phenylalanine 120, aspartate 284, and serine 327.

This sequence belongs to the ferredoxin--NADP reductase type 2 family. In terms of assembly, homodimer. FAD is required as a cofactor.

The enzyme catalyses 2 reduced [2Fe-2S]-[ferredoxin] + NADP(+) + H(+) = 2 oxidized [2Fe-2S]-[ferredoxin] + NADPH. The chain is Ferredoxin--NADP reductase from Picrophilus torridus (strain ATCC 700027 / DSM 9790 / JCM 10055 / NBRC 100828 / KAW 2/3).